Reading from the N-terminus, the 284-residue chain is Nucleotide-binding protein Sbal223_0704 (284 aa).

8–15 (GRSGSGKS) contributes to the ATP binding site. Residue 56–59 (DVRN) coordinates GTP.

Belongs to the RapZ-like family.

Its function is as follows. Displays ATPase and GTPase activities. The polypeptide is Nucleotide-binding protein Sbal223_0704 (Shewanella baltica (strain OS223)).